Reading from the N-terminus, the 186-residue chain is Probable nicotinate-nucleotide adenylyltransferase (186 aa).

It belongs to the NadD family.

It catalyses the reaction nicotinate beta-D-ribonucleotide + ATP + H(+) = deamido-NAD(+) + diphosphate. Its pathway is cofactor biosynthesis; NAD(+) biosynthesis; deamido-NAD(+) from nicotinate D-ribonucleotide: step 1/1. Its function is as follows. Catalyzes the reversible adenylation of nicotinate mononucleotide (NaMN) to nicotinic acid adenine dinucleotide (NaAD). In Thermus thermophilus (strain ATCC BAA-163 / DSM 7039 / HB27), this protein is Probable nicotinate-nucleotide adenylyltransferase.